The primary structure comprises 111 residues: Putative membrane protein insertion efficiency factor (111 aa).

It belongs to the UPF0161 family.

It is found in the cell inner membrane. Its function is as follows. Could be involved in insertion of integral membrane proteins into the membrane. This is Putative membrane protein insertion efficiency factor from Methylobacterium nodulans (strain LMG 21967 / CNCM I-2342 / ORS 2060).